A 129-amino-acid chain; its full sequence is MAKANVRVRKKVKKNIAEGIAHVHASFNNTIITITDRQGNALSWATSGGAGFKGSRKSTPFAAQVAAEAAGKAAQECGVKNLEVRIKGPGPGRESAVRALNAVGFKITSISDVTPVPHNGCRPPKKRRI.

This sequence belongs to the universal ribosomal protein uS11 family. Part of the 30S ribosomal subunit. Interacts with proteins S7 and S18. Binds to IF-3.

Its function is as follows. Located on the platform of the 30S subunit, it bridges several disparate RNA helices of the 16S rRNA. Forms part of the Shine-Dalgarno cleft in the 70S ribosome. The polypeptide is Small ribosomal subunit protein uS11 (Methylobacillus flagellatus (strain ATCC 51484 / DSM 6875 / VKM B-1610 / KT)).